The following is a 418-amino-acid chain: Phosphopentomutase (418 aa).

Asp10, Asp297, His302, Asp338, His339, and His350 together coordinate Mn(2+).

Belongs to the phosphopentomutase family. It depends on Mn(2+) as a cofactor.

The protein localises to the cytoplasm. The enzyme catalyses 2-deoxy-alpha-D-ribose 1-phosphate = 2-deoxy-D-ribose 5-phosphate. The catalysed reaction is alpha-D-ribose 1-phosphate = D-ribose 5-phosphate. The protein operates within carbohydrate degradation; 2-deoxy-D-ribose 1-phosphate degradation; D-glyceraldehyde 3-phosphate and acetaldehyde from 2-deoxy-alpha-D-ribose 1-phosphate: step 1/2. In terms of biological role, isomerase that catalyzes the conversion of deoxy-ribose 1-phosphate (dRib-1-P) and ribose 1-phosphate (Rib-1-P) to deoxy-ribose 5-phosphate (dRib-5-P) and ribose 5-phosphate (Rib-5-P), respectively. The protein is Phosphopentomutase of Chromohalobacter salexigens (strain ATCC BAA-138 / DSM 3043 / CIP 106854 / NCIMB 13768 / 1H11).